The sequence spans 552 residues: Leucine-rich repeat-containing protein 56 (552 aa).

LRR repeat units follow at residues Asn94–Leu115, His117–Leu138, Glu139–Glu160, Gln161–Gln182, and Arg186–Ser206. Disordered stretches follow at residues Ala348–Cys375 and Gln401–Leu435.

This sequence belongs to the LRRC56 family. As to quaternary structure, interacts with IFT88.

It is found in the cell projection. It localises to the cilium. Required for the assembly of dynein arms. This chain is Leucine-rich repeat-containing protein 56 (Lrrc56), found in Mus musculus (Mouse).